A 547-amino-acid chain; its full sequence is Chaperonin GroEL (547 aa).

ATP contacts are provided by residues 30–33 (TLGP), lysine 51, 87–91 (DGTTT), glycine 415, 480–482 (NAA), and aspartate 496. The disordered stretch occupies residues 525-547 (KPDDKPAMPPMGGGMGGMGGMDF). The span at 535–547 (MGGGMGGMGGMDF) shows a compositional bias: gly residues.

Belongs to the chaperonin (HSP60) family. In terms of assembly, forms a cylinder of 14 subunits composed of two heptameric rings stacked back-to-back. Interacts with the co-chaperonin GroES.

Its subcellular location is the cytoplasm. It carries out the reaction ATP + H2O + a folded polypeptide = ADP + phosphate + an unfolded polypeptide.. Functionally, together with its co-chaperonin GroES, plays an essential role in assisting protein folding. The GroEL-GroES system forms a nano-cage that allows encapsulation of the non-native substrate proteins and provides a physical environment optimized to promote and accelerate protein folding. The polypeptide is Chaperonin GroEL (Novosphingobium aromaticivorans (strain ATCC 700278 / DSM 12444 / CCUG 56034 / CIP 105152 / NBRC 16084 / F199)).